A 297-amino-acid polypeptide reads, in one-letter code: Phosphatidylinositol N-acetylglucosaminyltransferase subunit C (297 aa).

The next 4 membrane-spanning stretches (helical) occupy residues 67–87, 88–108, 153–173, and 239–259; these read VFVVIWWYMDEGLLAPQWLFG, TGLASSLVGYVLFDLIDGGDG, AVFMLLGHLIFFDYGANAAIV, and AFGGLLSISAVGAILFALLLF.

It belongs to the PIGC family. In terms of assembly, component of the glycosylphosphatidylinositol-N-acetylglucosaminyltransferase (GPI-GnT) complex composed at least by PIGA, PIGC, PIGH, PIGP, PIGQ, PIGY and DPM2. Interacts with PIGQ. Interacts with the heterodimer PIGA:PIGH.

The protein localises to the endoplasmic reticulum membrane. The protein operates within glycolipid biosynthesis; glycosylphosphatidylinositol-anchor biosynthesis. In terms of biological role, part of the glycosylphosphatidylinositol-N-acetylglucosaminyltransferase (GPI-GnT) complex that catalyzes the transfer of N-acetylglucosamine from UDP-N-acetylglucosamine to phosphatidylinositol and participates in the first step of GPI biosynthesis. The sequence is that of Phosphatidylinositol N-acetylglucosaminyltransferase subunit C from Mus musculus (Mouse).